A 508-amino-acid chain; its full sequence is MTRALLSVSDKSGLIPFAKNLVELGYELVSTGGTHKVLIDAGLDVISIDEVTDFPEMLDGRVKTLHPRVHAGLLARRDLPEHMAKLAEFDITPIDMVVVNLYPFKSTIQKEGVTEAEAIENIDIGGPSMLRSAAKNFASVLPIVDPKDYDVVVNKLKAGEVDREYRKSLAAKVFQHTASYDALIANYLTETSFPENLTLAYEKFDDMRYGENPHQPAAAYKTALPEAYSVLNADILHGKQLSYNNIRDADAALRIIAEYEETTVVTVKHMNPAGIGQGQTLEAAWDQAFAADDISIFGGIVALNREVDAATAEKMHDIFLEIIIAPSFTPEAYEILAAKKNLRLLTLPFTTSIPQKLEVTSVLGGVVVQERDLVGESENNFTVVSKAQPTKEQLQAMVFAQKVVKHVKSNAIVVARNGQTLGIGAGQPNRIDSVVYSIQKAEKKPGFDEAVLASDAFFPMDDSVQYAAEHGIKAIVEPGGSIKDKDSIAKADELGVVLIFSGTRHFKH.

Residues 1–144 (MTRALLSVSD…KNFASVLPIV (144 aa)) enclose the MGS-like domain.

The protein belongs to the PurH family.

The catalysed reaction is (6R)-10-formyltetrahydrofolate + 5-amino-1-(5-phospho-beta-D-ribosyl)imidazole-4-carboxamide = 5-formamido-1-(5-phospho-D-ribosyl)imidazole-4-carboxamide + (6S)-5,6,7,8-tetrahydrofolate. It catalyses the reaction IMP + H2O = 5-formamido-1-(5-phospho-D-ribosyl)imidazole-4-carboxamide. Its pathway is purine metabolism; IMP biosynthesis via de novo pathway; 5-formamido-1-(5-phospho-D-ribosyl)imidazole-4-carboxamide from 5-amino-1-(5-phospho-D-ribosyl)imidazole-4-carboxamide (10-formyl THF route): step 1/1. The protein operates within purine metabolism; IMP biosynthesis via de novo pathway; IMP from 5-formamido-1-(5-phospho-D-ribosyl)imidazole-4-carboxamide: step 1/1. The chain is Bifunctional purine biosynthesis protein PurH from Leuconostoc mesenteroides subsp. mesenteroides (strain ATCC 8293 / DSM 20343 / BCRC 11652 / CCM 1803 / JCM 6124 / NCDO 523 / NBRC 100496 / NCIMB 8023 / NCTC 12954 / NRRL B-1118 / 37Y).